A 149-amino-acid chain; its full sequence is 3-dehydroquinate dehydratase (149 aa).

Tyrosine 26 functions as the Proton acceptor in the catalytic mechanism. Residues asparagine 77, histidine 83, and aspartate 90 each contribute to the substrate site. Histidine 103 functions as the Proton donor in the catalytic mechanism. Substrate-binding positions include 104 to 105 (LS) and arginine 114.

It belongs to the type-II 3-dehydroquinase family. In terms of assembly, homododecamer.

The enzyme catalyses 3-dehydroquinate = 3-dehydroshikimate + H2O. It functions in the pathway metabolic intermediate biosynthesis; chorismate biosynthesis; chorismate from D-erythrose 4-phosphate and phosphoenolpyruvate: step 3/7. Functionally, catalyzes a trans-dehydration via an enolate intermediate. This is 3-dehydroquinate dehydratase from Aliivibrio salmonicida (strain LFI1238) (Vibrio salmonicida (strain LFI1238)).